The primary structure comprises 112 residues: UPF0482 protein SG1468 (112 aa).

The N-terminal stretch at 1-22 (MNTIPTRCLLGGLLALSLLAYA) is a signal peptide.

The protein belongs to the UPF0482 family.

This Sodalis glossinidius (strain morsitans) protein is UPF0482 protein SG1468.